We begin with the raw amino-acid sequence, 426 residues long: Zinc finger protein 662 (426 aa).

The KRAB domain maps to 1–44 (MLENYGAVASLAAFPFPKPALISQLERGETPWCSVPRGALDGEA). C2H2-type zinc fingers lie at residues 192–214 (YICE…QKTH), 220–242 (YGCK…QRIH), 248–270 (YECQ…QRIH), 276–298 (FECK…QRIH), 304–326 (YTCK…QRMH), 332–354 (YECK…QRVH), 360–382 (HECT…QRIH), and 388–410 (YKCN…QRRH).

It belongs to the krueppel C2H2-type zinc-finger protein family.

It is found in the nucleus. In terms of biological role, may be involved in transcriptional regulation. The polypeptide is Zinc finger protein 662 (ZNF662) (Homo sapiens (Human)).